The sequence spans 88 residues: Large ribosomal subunit protein bL27 (88 aa).

Residues 1 to 23 are disordered; sequence MAHKKAGGSSRNGRDSAGRRLGV.

Belongs to the bacterial ribosomal protein bL27 family.

The polypeptide is Large ribosomal subunit protein bL27 (Methylorubrum populi (strain ATCC BAA-705 / NCIMB 13946 / BJ001) (Methylobacterium populi)).